The following is a 296-amino-acid chain: GTPase Era (296 aa).

In terms of domain architecture, Era-type G spans R7 to E174. Residues G15–S22 form a G1 region. G15–S22 provides a ligand contact to GTP. The tract at residues Q41–H45 is G2. Residues D62 to G65 form a G3 region. GTP-binding positions include D62–F66 and S123–D126. A G4 region spans residues S123 to D126. The G5 stretch occupies residues V153–A155. Residues V197–K281 enclose the KH type-2 domain.

Belongs to the TRAFAC class TrmE-Era-EngA-EngB-Septin-like GTPase superfamily. Era GTPase family. Monomer.

The protein localises to the cytoplasm. It is found in the cell inner membrane. Its function is as follows. An essential GTPase that binds both GDP and GTP, with rapid nucleotide exchange. Plays a role in 16S rRNA processing and 30S ribosomal subunit biogenesis and possibly also in cell cycle regulation and energy metabolism. The chain is GTPase Era from Bordetella avium (strain 197N).